Reading from the N-terminus, the 1383-residue chain is DNA-directed RNA polymerase subunit beta (1383 aa).

It belongs to the RNA polymerase beta chain family. The RNAP catalytic core consists of 2 alpha, 1 beta, 1 beta' and 1 omega subunit. When a sigma factor is associated with the core the holoenzyme is formed, which can initiate transcription.

The enzyme catalyses RNA(n) + a ribonucleoside 5'-triphosphate = RNA(n+1) + diphosphate. In terms of biological role, DNA-dependent RNA polymerase catalyzes the transcription of DNA into RNA using the four ribonucleoside triphosphates as substrates. The chain is DNA-directed RNA polymerase subunit beta from Bartonella tribocorum (strain CIP 105476 / IBS 506).